Consider the following 40-residue polypeptide: Bomanin Short 6 (40 aa).

The N-terminal stretch at 1-18 is a signal peptide; that stretch reads MKLLSITFLFGLLALASA. The propeptide at 19–23 is removed by a dipeptidylpeptidase; that stretch reads NPLSP. Cys32 and Cys35 form a disulfide bridge.

This sequence belongs to the bomanin family.

It is found in the secreted. Secreted immune-induced peptide induced by Toll signaling. Has a role in resistance to bacterial and fungal infections. The strength of antimicrobial activity appears to correlate with the overall level of expression. This Drosophila melanogaster (Fruit fly) protein is Bomanin Short 6.